The chain runs to 510 residues: ATP synthase subunit alpha, chloroplastic (510 aa).

170 to 177 is an ATP binding site; sequence GDRQTGKT.

The protein belongs to the ATPase alpha/beta chains family. As to quaternary structure, F-type ATPases have 2 components, CF(1) - the catalytic core - and CF(0) - the membrane proton channel. CF(1) has five subunits: alpha(3), beta(3), gamma(1), delta(1), epsilon(1). CF(0) has four main subunits: a, b, b' and c.

Its subcellular location is the plastid. It is found in the chloroplast thylakoid membrane. It carries out the reaction ATP + H2O + 4 H(+)(in) = ADP + phosphate + 5 H(+)(out). Functionally, produces ATP from ADP in the presence of a proton gradient across the membrane. The alpha chain is a regulatory subunit. This chain is ATP synthase subunit alpha, chloroplastic, found in Lotus japonicus (Lotus corniculatus var. japonicus).